We begin with the raw amino-acid sequence, 151 residues long: Protein NrdI (151 aa).

Belongs to the NrdI family.

Functionally, probably involved in ribonucleotide reductase function. This is Protein NrdI from Mesoplasma florum (strain ATCC 33453 / NBRC 100688 / NCTC 11704 / L1) (Acholeplasma florum).